A 99-amino-acid chain; its full sequence is UPF0751 protein BAMEG_A0107 (99 aa).

Belongs to the UPF0751 family.

The protein is UPF0751 protein BAMEG_A0107 of Bacillus anthracis (strain CDC 684 / NRRL 3495).